A 247-amino-acid chain; its full sequence is 2,3-bisphosphoglycerate-dependent phosphoglycerate mutase (247 aa).

Residues 8-15 (RHGESQWN), 21-22 (TG), Arg60, 87-90 (ERHY), Lys98, 114-115 (RR), and 183-184 (GN) contribute to the substrate site. Residue His9 is the Tele-phosphohistidine intermediate of the active site. Glu87 serves as the catalytic Proton donor/acceptor.

Belongs to the phosphoglycerate mutase family. BPG-dependent PGAM subfamily.

It carries out the reaction (2R)-2-phosphoglycerate = (2R)-3-phosphoglycerate. It functions in the pathway carbohydrate degradation; glycolysis; pyruvate from D-glyceraldehyde 3-phosphate: step 3/5. Its function is as follows. Catalyzes the interconversion of 2-phosphoglycerate and 3-phosphoglycerate. This is 2,3-bisphosphoglycerate-dependent phosphoglycerate mutase from Chlorobaculum tepidum (strain ATCC 49652 / DSM 12025 / NBRC 103806 / TLS) (Chlorobium tepidum).